We begin with the raw amino-acid sequence, 512 residues long: ATP synthase subunit alpha (512 aa).

169-176 (GDRQTGKT) contributes to the ATP binding site.

Belongs to the ATPase alpha/beta chains family. F-type ATPases have 2 components, CF(1) - the catalytic core - and CF(0) - the membrane proton channel. CF(1) has five subunits: alpha(3), beta(3), gamma(1), delta(1), epsilon(1). CF(0) has four main subunits: a(1), b(1), b'(1) and c(9-12).

It localises to the cell inner membrane. It carries out the reaction ATP + H2O + 4 H(+)(in) = ADP + phosphate + 5 H(+)(out). Its function is as follows. Produces ATP from ADP in the presence of a proton gradient across the membrane. The alpha chain is a regulatory subunit. This is ATP synthase subunit alpha from Jannaschia sp. (strain CCS1).